Here is a 604-residue protein sequence, read N- to C-terminus: MTTRKDKPLNIYHTLVSIIIPVYNGANYMKEAINSALAQTYKNIEIIVVNDGSKDNGETERVALSYGDKIRYFYKENGGCGSALNYGIKNMQGEYFSWLSHDDIYYPNKIEHQVDILNKLDNKDTIIYGGYELIDEKGNSLRYIKPDSVLPINKLNISLLPLLRGLIHGCSLLMPAKYFHEVGIFNEALPTTQDYDLWFKIFRVAPIHFDESILIKSRFHSEQGSKKISNHNEECNVLWSSFLHELTEEEMIKMEGSPYLFLTRTATFLSNNTPYKKACDLANTMAKQVLNDTKISVIIPVYNRINWAIEAIKSVLIQTHKNFEILIIDDGSTDDISELTAICKKDKRIKYFHKKNEGPAAARNLGIKNAIGKYIAFLDSDDLFYKDKIEIQLKFMEENNFIFSHTSYHKINEKGKYIESVHSGLFSGNVFPQVIQTCPIAMPTVMGTLTLFQENLFPENIRSGEDCCLWISIASKNSIGGIDKELSKVRISGGTNTFMDPNKYSVGLINITSYVLNDAYLSKFSPFTINLLLAAVTQLRLLENKNEDYKKSNISFFKNNYVIQKIRTYCFVTKILILLTITSIRQEGIRATISRIQRWLKKHI.

Belongs to the glycosyltransferase 2 family.

This is an uncharacterized protein from Rickettsia conorii (strain ATCC VR-613 / Malish 7).